Consider the following 740-residue polypeptide: MFKSTLPIAAAISVALTSMVLPAKALAANEAKTNQFWWPDQLSLSPLRQHGAESNPYGEQFNYAKEFASLDLAMLKKDIQTTLTDSKSWWPADWGHYGPLMIRMAWHSAGVYRVHDGRGGASGGQQRFAPLNSWPDNVNLDKARRLLWPVKQKYGRKISWADLMVLSGNVALESMGFKTFGFAGGRTDDWEPDLVYWGPETAMLSDKRRDKKGKLKGPLAAVEMGLIYVNPEGPHGKPDPLLAANDIRMSFGRMAMNDEEIVALLAGGHTLGKAHGAKKPNGCVGAEPAAADIEAQGLGWKNKCGTGVGADTISSGLEGAWTVTPTQWSSNYLDNLMNFNWVLTKSPAGAKQWIPDNKAAANLVPDAHIPNKRHAPIMFTTDIALKEDPQFRKIVERFRADPTQFDLAFAKAWFKLTHRDMGPRARYVGAEVPSEVLMWQDPIPAINYQLITDKDIKQLKKQITNSGLTTSELVRTAWAAASSHRVTDMRGGANGARINLEPQNSWAVNNPKELGKVLAKLEGIQARFNKKSAKTKVSLADVIVLGGATAIENAAAKAGNRITVPFSPGRADASQAQTNVKSFNYLKPKADGFRNFYTDDSYSSPAEMLVDKANSLGLNVPEMTVLIGGMRALDANYDASSYGVLTNNPGVLTNDFFVNLLDMKTVWSKDKSNAGIYIGHDRASGTEKWQATPVDLIFGSSSELRAIAEVYASDDADKKFINDFTKAWVKVMQLDRFDLK.

An N-terminal signal peptide occupies residues 1-27 (MFKSTLPIAAAISVALTSMVLPAKALA). A cross-link (tryptophyl-tyrosyl-methioninium (Trp-Tyr) (with M-254)) is located at residues 106–228 (WHSAGVYRVH…LAAVEMGLIY (123 aa)). Histidine 107 (proton acceptor) is an active-site residue. Residues 228 to 254 (YVNPEGPHGKPDPLLAANDIRMSFGRM) constitute a cross-link (tryptophyl-tyrosyl-methioninium (Tyr-Met) (with W-106)). Residue histidine 269 participates in heme b binding.

Belongs to the peroxidase family. Peroxidase/catalase subfamily. In terms of assembly, homodimer or homotetramer. It depends on heme b as a cofactor. Post-translationally, formation of the three residue Trp-Tyr-Met cross-link is important for the catalase, but not the peroxidase activity of the enzyme.

It carries out the reaction H2O2 + AH2 = A + 2 H2O. The enzyme catalyses 2 H2O2 = O2 + 2 H2O. Its function is as follows. Bifunctional enzyme with both catalase and broad-spectrum peroxidase activity. This is Catalase-peroxidase from Colwellia psychrerythraea (strain 34H / ATCC BAA-681) (Vibrio psychroerythus).